Reading from the N-terminus, the 465-residue chain is ATP-dependent protease ATPase subunit HslU (465 aa).

Residues Val-19 and 61-66 each bind ATP; that span reads GVGKTE. The disordered stretch occupies residues 153–175; it reads LFQSDGSDGDDETTEQDSHDEIR. Asp-279, Glu-343, and Arg-415 together coordinate ATP.

This sequence belongs to the ClpX chaperone family. HslU subfamily. In terms of assembly, a double ring-shaped homohexamer of HslV is capped on each side by a ring-shaped HslU homohexamer. The assembly of the HslU/HslV complex is dependent on binding of ATP.

It localises to the cytoplasm. ATPase subunit of a proteasome-like degradation complex; this subunit has chaperone activity. The binding of ATP and its subsequent hydrolysis by HslU are essential for unfolding of protein substrates subsequently hydrolyzed by HslV. HslU recognizes the N-terminal part of its protein substrates and unfolds these before they are guided to HslV for hydrolysis. The chain is ATP-dependent protease ATPase subunit HslU from Oceanobacillus iheyensis (strain DSM 14371 / CIP 107618 / JCM 11309 / KCTC 3954 / HTE831).